The chain runs to 63 residues: Overexpressed in colon carcinoma 1 protein homolog (63 aa).

A compositionally biased stretch (polar residues) spans 1–10 (MGCGNSTATS). The disordered stretch occupies residues 1 to 39 (MGCGNSTATSAAAGRGPTGAVKDTTEDSITEDDKRRNYG).

This sequence belongs to the OCC1 family.

The polypeptide is Overexpressed in colon carcinoma 1 protein homolog (Mus musculus (Mouse)).